A 1303-amino-acid chain; its full sequence is D-lysergyl-peptide-synthetase subunit 2 (1303 aa).

The tract at residues 256–653 is adenylation (A) domain; that stretch reads EWCRWTPSAV…CRKSTQVKLR (398 aa). The Carrier domain maps to 793-869; sequence APSNDIEEAF…ELARHTKLVA (77 aa). Position 830 is an O-(pantetheine 4'-phosphoryl)serine (S830). The interval 905–1294 is condensation (C) domain; that stretch reads EDVYPCTPLQ…HAAPRTLIGD (390 aa).

This sequence belongs to the NRP synthetase family.

Its pathway is alkaloid biosynthesis; ergot alkaloid biosynthesis. Its function is as follows. D-lysergyl-peptide-synthetase subunit 2; part of the gene cluster that mediates the biosynthesis of fungal ergot alkaloid. DmaW catalyzes the first step of ergot alkaloid biosynthesis by condensing dimethylallyl diphosphate (DMAP) and tryptophan to form 4-dimethylallyl-L-tryptophan. The second step is catalyzed by the methyltransferase easF that methylates 4-dimethylallyl-L-tryptophan in the presence of S-adenosyl-L-methionine, resulting in the formation of 4-dimethylallyl-L-abrine. The catalase easC and the FAD-dependent oxidoreductase easE then transform 4-dimethylallyl-L-abrine to chanoclavine-I which is further oxidized by easD in the presence of NAD(+), resulting in the formation of chanoclavine-I aldehyde. Agroclavine dehydrogenase easG then mediates the conversion of chanoclavine-I aldehyde to agroclavine via a non-enzymatic adduct reaction: the substrate is an iminium intermediate that is formed spontaneously from chanoclavine-I aldehyde in the presence of glutathione. The presence of easA is not required to complete this reaction. Further conversion of agroclavine to paspalic acid is a two-step process involving oxidation of agroclavine to elymoclavine and of elymoclavine to paspalic acid, the second step being performed by the elymoclavine oxidase cloA. Paspalic acid is then further converted to D-lysergic acid. Ergopeptines are assembled from D-lysergic acid and three different amino acids by the D-lysergyl-peptide-synthetases composed each of a monomudular and a trimodular nonribosomal peptide synthetase subunit. LpsB and lpsC encode the monomodular subunits responsible for D-lysergic acid activation and incorporation into the ergopeptine backbone. LpsA1 and A2 subunits encode the trimodular nonribosomal peptide synthetase assembling the tripeptide portion of ergopeptines. LpsA1 is responsible for formation of the major ergopeptine, ergotamine, and lpsA2 for alpha-ergocryptine, the minor ergopeptine of the total alkaloid mixture elaborated by C.purpurea. D-lysergyl-tripeptides are assembled by the nonribosomal peptide synthetases and released as N-(D-lysergyl-aminoacyl)-lactams. Cyclolization of the D-lysergyl-tripeptides is performed by the Fe(2+)/2-ketoglutarate-dependent dioxygenase easH which introduces a hydroxyl group into N-(D-lysergyl-aminoacyl)-lactam at alpha-C of the aminoacyl residue followed by spontaneous condensation with the terminal lactam carbonyl group. The polypeptide is D-lysergyl-peptide-synthetase subunit 2 (Claviceps purpurea (strain 20.1) (Ergot fungus)).